Reading from the N-terminus, the 327-residue chain is MSIAQDRGIVFKLLSIYRAAAGIFMALAQLIVIFFGYCDFKIKGYRIASYNAPTFASSFIILAVCLLLVVVLENPEVKVTNSENSLFSALKQFFRVERKKLISCLILLWSMFLSSFIMSEVVYFMPLFLTLHVNWDTKFQGIAFMVASILGVTGSYFAPKLINVGCSCGRAKDGGLEESDTTGSETVEVKKKDSLYSGQVFLSIFALFVSLLGQAFMIGASEALKHKSMPPTNSGIFFSAGMSITLLGYNFLASSIPALFSMYIDPKLKVQLMPSIGAISGIGKLVAPIVLAALYGTRLGLSIAVGFGMILVAVSIPPLIWLRKKRC.

Over 1–19 (MSIAQDRGIVFKLLSIYRA) the chain is Cytoplasmic. The chain crosses the membrane as a helical span at residues 20–40 (AAGIFMALAQLIVIFFGYCDF). The Extracellular portion of the chain corresponds to 41-51 (KIKGYRIASYN). Residues 52–72 (APTFASSFIILAVCLLLVVVL) traverse the membrane as a helical segment. At 73–104 (ENPEVKVTNSENSLFSALKQFFRVERKKLISC) the chain is on the cytoplasmic side. The chain crosses the membrane as a helical span at residues 105 to 125 (LILLWSMFLSSFIMSEVVYFM). At 126–141 (PLFLTLHVNWDTKFQG) the chain is on the extracellular side. The chain crosses the membrane as a helical span at residues 142–162 (IAFMVASILGVTGSYFAPKLI). At 163–199 (NVGCSCGRAKDGGLEESDTTGSETVEVKKKDSLYSGQ) the chain is on the cytoplasmic side. A helical membrane pass occupies residues 200 to 220 (VFLSIFALFVSLLGQAFMIGA). Topologically, residues 221-235 (SEALKHKSMPPTNSG) are extracellular. Residues 236-256 (IFFSAGMSITLLGYNFLASSI) traverse the membrane as a helical segment. The Cytoplasmic segment spans residues 257–275 (PALFSMYIDPKLKVQLMPS). The chain crosses the membrane as a helical span at residues 276–296 (IGAISGIGKLVAPIVLAALYG). The Extracellular portion of the chain corresponds to 297-300 (TRLG). The helical transmembrane segment at 301-321 (LSIAVGFGMILVAVSIPPLIW) threads the bilayer. Topologically, residues 322-327 (LRKKRC) are cytoplasmic.

It is found in the membrane. This is an uncharacterized protein from Saccharomyces cerevisiae (strain ATCC 204508 / S288c) (Baker's yeast).